The following is a 178-amino-acid chain: Bifunctional protein PyrR (178 aa).

Residues threonine 42–arginine 43, arginine 83, aspartate 103–threonine 111, arginine 136, and valine 160 each bind substrate. The short motif at valine 99 to threonine 111 is the PRPP-binding element.

The protein belongs to the purine/pyrimidine phosphoribosyltransferase family. PyrR subfamily.

The enzyme catalyses UMP + diphosphate = 5-phospho-alpha-D-ribose 1-diphosphate + uracil. Its function is as follows. Regulates the transcription of the pyrimidine nucleotide (pyr) operon in response to exogenous pyrimidines. In terms of biological role, also displays a weak uracil phosphoribosyltransferase activity which is not physiologically significant. In Synechocystis sp. (strain ATCC 27184 / PCC 6803 / Kazusa), this protein is Bifunctional protein PyrR.